Reading from the N-terminus, the 292-residue chain is MKYIGAHVSAAGGVENAPKNAVAIGANAFALFTKNQRQWKAKPLTEESIAAFKENLTEAGIEARHVLPHDSYLINLGHPEAEALEKSRGAFMDELGRCAQLGLPLLNFHPGSHLKKIDPEACLDRIAESINLAHGSVADVITVIENTAGQGTNLGYRFEHLARIIAAVEDKSRVGVCIDTCHAFAAGYDLRTVEACEKSWAEFDRIVGFKYLRGMHLNDAKSEFFSRVDRHQSLGAGNIGWEAFRYIMKDDRFDDIPLILETVDTSLWQEEIKKLQQWSVVEWRELEKTKTS.

H69, H109, E145, D179, H182, H216, D229, H231, and E261 together coordinate Zn(2+).

Belongs to the AP endonuclease 2 family. The cofactor is Zn(2+).

The catalysed reaction is Endonucleolytic cleavage to 5'-phosphooligonucleotide end-products.. In terms of biological role, endonuclease IV plays a role in DNA repair. It cleaves phosphodiester bonds at apurinic or apyrimidinic (AP) sites, generating a 3'-hydroxyl group and a 5'-terminal sugar phosphate. This Desulfotalea psychrophila (strain LSv54 / DSM 12343) protein is Probable endonuclease 4.